Reading from the N-terminus, the 143-residue chain is MSHDSDDKTFPYQKDDAELRRRLTPMQYEVTQHAATERAFTGEYTDTEDAGIYKCVVCSTPLFESGAKFHSGCGWPSYFKPLNGEVIDEKVDYSHGMVRVEVRCNHCGAHLGHVFEDGPRDKTGLRYCINSAALNFESRPENE.

The MsrB domain maps to 16–139; that stretch reads DAELRRRLTP…NSAALNFESR (124 aa). Residues C55, C58, C104, and C107 each coordinate Zn(2+). C128 functions as the Nucleophile in the catalytic mechanism.

It belongs to the MsrB Met sulfoxide reductase family. Zn(2+) serves as cofactor.

The catalysed reaction is L-methionyl-[protein] + [thioredoxin]-disulfide + H2O = L-methionyl-(R)-S-oxide-[protein] + [thioredoxin]-dithiol. This is Peptide methionine sulfoxide reductase MsrB from Burkholderia orbicola (strain MC0-3).